The following is a 342-amino-acid chain: Ketol-acid reductoisomerase (NADP(+)) (342 aa).

The 181-residue stretch at 2–182 (AEIYYDNDAD…GGLRAGGIKT (181 aa)) folds into the KARI N-terminal Rossmann domain. NADP(+) contacts are provided by residues 25–28 (YGSQ), K48, S51, S53, and 83–86 (DQVQ). The active site involves H108. An NADP(+)-binding site is contributed by G134. Residues 183 to 328 (TFTEETETDL…RELRKLFAWN (146 aa)) form the KARI C-terminal knotted domain. The Mg(2+) site is built by D191, E195, E227, and E231. S252 serves as a coordination point for substrate.

Belongs to the ketol-acid reductoisomerase family. Requires Mg(2+) as cofactor.

It catalyses the reaction (2R)-2,3-dihydroxy-3-methylbutanoate + NADP(+) = (2S)-2-acetolactate + NADPH + H(+). It carries out the reaction (2R,3R)-2,3-dihydroxy-3-methylpentanoate + NADP(+) = (S)-2-ethyl-2-hydroxy-3-oxobutanoate + NADPH + H(+). Its pathway is amino-acid biosynthesis; L-isoleucine biosynthesis; L-isoleucine from 2-oxobutanoate: step 2/4. It participates in amino-acid biosynthesis; L-valine biosynthesis; L-valine from pyruvate: step 2/4. In terms of biological role, involved in the biosynthesis of branched-chain amino acids (BCAA). Catalyzes an alkyl-migration followed by a ketol-acid reduction of (S)-2-acetolactate (S2AL) to yield (R)-2,3-dihydroxy-isovalerate. In the isomerase reaction, S2AL is rearranged via a Mg-dependent methyl migration to produce 3-hydroxy-3-methyl-2-ketobutyrate (HMKB). In the reductase reaction, this 2-ketoacid undergoes a metal-dependent reduction by NADPH to yield (R)-2,3-dihydroxy-isovalerate. This chain is Ketol-acid reductoisomerase (NADP(+)), found in Leifsonia xyli subsp. xyli (strain CTCB07).